A 399-amino-acid polypeptide reads, in one-letter code: Elongation factor Tu (399 aa).

Residues 10–208 (KPHVNIGTIG…TVDSYIPEPE (199 aa)) form the tr-type G domain. Residues 19-26 (GHVDHGKT) are G1. 19–26 (GHVDHGKT) is a GTP binding site. Thr-26 lines the Mg(2+) pocket. Residues 64 to 68 (GITIN) are G2. Residues 85–88 (DAPG) form a G3 region. Residues 85-89 (DAPGH) and 140-143 (NKVD) contribute to the GTP site. The segment at 140–143 (NKVD) is G4. The interval 178–180 (SAL) is G5.

The protein belongs to the TRAFAC class translation factor GTPase superfamily. Classic translation factor GTPase family. EF-Tu/EF-1A subfamily. In terms of assembly, monomer.

It localises to the cytoplasm. The enzyme catalyses GTP + H2O = GDP + phosphate + H(+). Its function is as follows. GTP hydrolase that promotes the GTP-dependent binding of aminoacyl-tRNA to the A-site of ribosomes during protein biosynthesis. The protein is Elongation factor Tu of Streptococcus pyogenes serotype M12 (strain MGAS2096).